A 314-amino-acid polypeptide reads, in one-letter code: Ribonuclease Z (314 aa).

Zn(2+) is bound by residues histidine 61, histidine 63, aspartate 65, histidine 66, histidine 137, aspartate 207, and histidine 263. Aspartate 65 acts as the Proton acceptor in catalysis.

This sequence belongs to the RNase Z family. In terms of assembly, homodimer. Zn(2+) serves as cofactor.

The catalysed reaction is Endonucleolytic cleavage of RNA, removing extra 3' nucleotides from tRNA precursor, generating 3' termini of tRNAs. A 3'-hydroxy group is left at the tRNA terminus and a 5'-phosphoryl group is left at the trailer molecule.. Its function is as follows. Zinc phosphodiesterase, which displays some tRNA 3'-processing endonuclease activity. Probably involved in tRNA maturation, by removing a 3'-trailer from precursor tRNA. The sequence is that of Ribonuclease Z from Thermococcus kodakarensis (strain ATCC BAA-918 / JCM 12380 / KOD1) (Pyrococcus kodakaraensis (strain KOD1)).